The following is a 338-amino-acid chain: Solute carrier family 35 member G5 (338 aa).

Residues 1–28 form a disordered region; that stretch reads MAGSHPYFNLPDSTHPSPPSGPPSLRWH. 9 consecutive transmembrane segments (helical) span residues 37 to 57, 67 to 87, 105 to 125, 160 to 180, 190 to 210, 221 to 241, 250 to 270, 281 to 301, and 310 to 330; these read TNGLLVALLGGGLPAGFVGPL, LPSLELLICRCLFHLPIALLL, CFCALLNVLSIGCAYSAVQVV, CGLLGSILGLIIIVGPGLWTL, ALGYVQAFLGGLALSLGLLVY, TVAFLSGLVGLLGSVPGLFVL, LLSWSCVGAVGILTLVSFTCV, LVCAVLHSEVVVALILQYYML, and IMGAGVVLGNITIIPAWNLSC. Residues 49–174 enclose the EamA 1 domain; the sequence is LPAGFVGPLS…SILGLIIIVG (126 aa). An EamA 2 domain is found at 272-325; that stretch reads YAVTKAHPALVCAVLHSEVVVALILQYYMLPETVAPSDIMGAGVVLGNITIIPA.

This sequence belongs to the SLC35G solute transporter family.

It localises to the membrane. This Gorilla gorilla gorilla (Western lowland gorilla) protein is Solute carrier family 35 member G5 (SLC35G5).